The following is a 172-amino-acid chain: NADH-ubiquinone oxidoreductase chain 6 (172 aa).

Transmembrane regions (helical) follow at residues methionine 1–leucine 21, isoleucine 26–glycine 48, glycine 52–alanine 74, tryptophan 86–phenylalanine 106, and cysteine 147–isoleucine 167.

This sequence belongs to the complex I subunit 6 family. Core subunit of respiratory chain NADH dehydrogenase (Complex I) which is composed of 45 different subunits.

The protein resides in the mitochondrion inner membrane. It carries out the reaction a ubiquinone + NADH + 5 H(+)(in) = a ubiquinol + NAD(+) + 4 H(+)(out). Core subunit of the mitochondrial membrane respiratory chain NADH dehydrogenase (Complex I) which catalyzes electron transfer from NADH through the respiratory chain, using ubiquinone as an electron acceptor. Essential for the catalytic activity and assembly of complex I. The chain is NADH-ubiquinone oxidoreductase chain 6 from Rattus norvegicus (Rat).